A 573-amino-acid polypeptide reads, in one-letter code: Developmental and secondary metabolism regulator veA (573 aa).

Pro residues predominate over residues 1–11 (MATLAAPPPPL). 2 disordered regions span residues 1–24 (MATL…SRIT) and 39–63 (QPKR…DPPP). The Velvet domain maps to 27 to 230 (GKKITYKLNI…AEQGCRVRIR (204 aa)). A Nuclear localization signal motif is present at residues 41-46 (KRARAC). Residues Thr167 and Thr170 each carry the phosphothreonine modification. Residue Ser183 is modified to Phosphoserine. Disordered regions lie at residues 236–295 (RRRG…RRPS), 307–367 (YQRP…SYQS), and 384–573 (SHIP…ATMR). Over residues 241 to 260 (KRTEDYDYDNERGYNNRRPD) the composition is skewed to basic and acidic residues. Tyr254 carries the post-translational modification Phosphotyrosine. Pro residues-rich tracts occupy residues 318–339 (SSTP…PSTP) and 347–361 (PAPP…PPLH). The span at 387–412 (PQQTTTPTHPYSPRSSISHSRNQSIS) shows a compositional bias: low complexity. The segment covering 452–493 (PSVNSRSKTPSNMITSLPPIQSLSELPSTTSQPSSAIGSSPA) has biased composition (polar residues). The tract at residues 459 to 498 (KTPSNMITSLPPIQSLSELPSTTSQPSSAIGSSPANEPGP) is PEST. Over residues 510 to 522 (RTYEESFGHDDRP) the composition is skewed to basic and acidic residues.

This sequence belongs to the velvet family. VeA subfamily. In terms of assembly, component of the heterotrimeric velvet complex composed of laeA, veA and velB; VeA acting as a bridging protein between laeA and velB. Interacts with the light-sensing phytochrome fphA. Interacts with llmF. Post-translationally, phosphorylated at Thr-167, Thr-170, Ser-183 and Tyr-254. Thr-167 should be phosphorylated and T170 and S183 should be dephosphorylated to achieve light induction of conidiation. Phosphorylation of Ser-183 and Tyr-254 influence sterigmatocystin production in a light-independent manner. Phosphorylation of Thr-167 and Thr-170 modulates expression of veA.

Its subcellular location is the nucleus. It localises to the cytoplasm. Component of the velvet transcription factor complex that controls sexual/asexual developmental ratio in response to light, promoting sexual development in the darkness while stimulating asexual sporulation under illumination. The velvet complex acts as a global regulator for secondary metabolite gene expression. Controls the expression of the sterigmatocystin and penicillin gene clusters. Represses the cryptic ors gene cluster producing orsellinic acid and its F9775 derivatives in a laeA-independent manner. Required for full induction of faoA gene expression by fructosyl amines. Positively regulates the expression of the early sexual development gene esdC. Controls the expression of mannoprotein mnpA. The protein is Developmental and secondary metabolism regulator veA of Emericella nidulans (strain FGSC A4 / ATCC 38163 / CBS 112.46 / NRRL 194 / M139) (Aspergillus nidulans).